A 169-amino-acid polypeptide reads, in one-letter code: Pyrophosphate-energized proton pump 1 (169 aa).

3 consecutive transmembrane segments (helical) span residues 45 to 65, 114 to 134, and 141 to 161; these read YVVA…GIAM, VIPS…VLLI, and AFAA…LVAI.

The protein belongs to the H(+)-translocating pyrophosphatase (TC 3.A.10) family. In terms of assembly, homodimer. Mg(2+) is required as a cofactor.

It localises to the cell inner membrane. It catalyses the reaction diphosphate + H2O + H(+)(in) = 2 phosphate + 2 H(+)(out). Proton pump that utilizes the energy of pyrophosphate hydrolysis as the driving force for proton movement across the membrane. Generates a proton motive force. The chain is Pyrophosphate-energized proton pump 1 (hppA1) from Rhizobium leguminosarum bv. trifolii.